Here is a 300-residue protein sequence, read N- to C-terminus: U1 small nuclear ribonucleoprotein 70 kDa homolog (300 aa).

An RRM domain is found at 107 to 198 (RTIFIGRLPY…RTVKYFKPRR (92 aa)). Disordered regions lie at residues 204–248 (GGRG…AYSA) and 263–300 (NRPL…APDY). Residues 265 to 279 (PLLSAATPTAAVTSV) are compositionally biased toward low complexity.

As to quaternary structure, component of the spliceosome, where it is associated with snRNP U1. Binds stem loop I of U1 snRNA. Interacts with mRNA.

Its subcellular location is the nucleus. Its function is as follows. Involved in nuclear mRNA splicing. This is U1 small nuclear ribonucleoprotein 70 kDa homolog (SNP1) from Saccharomyces cerevisiae (strain ATCC 204508 / S288c) (Baker's yeast).